The sequence spans 654 residues: Amyloid beta precursor like protein 1 (654 aa).

A signal peptide spans 1-38 (MGPTSPAARGQGRRWRPPPLPLLLPLSLLLLRAQLAVG). The Extracellular portion of the chain corresponds to 39–584 (NLAVGSPSAA…APSGTGVSRE (546 aa)). The tract at residues 50-146 (APGSAQVAGL…PFHCLPGEFV (97 aa)) is GFLD subdomain. In terms of domain architecture, E1 spans 50–212 (APGSAQVAGL…RGVEYVCCPP (163 aa)). Intrachain disulfides connect C60–C84, C95–C140, C120–C128, C156–C210, C167–C197, and C181–C209. The interval 154–212 (EGCRFLHQERMDQCESSTRRHQEAQEACSSQGLILHGSGMLLPCGSDRFRGVEYVCCPP) is cuBD subdomain. Residue H174 participates in Cu(2+) binding. Positions 206, 209, and 210 each coordinate Zn(2+). The tract at residues 214-297 (ATPNPSGMAA…VTPTPRPTDG (84 aa)) is disordered. Over residues 262–272 (QAEEEEEEEEE) the composition is skewed to acidic residues. Residues 297–488 (GVDVYFGMPG…QELRPQIQEL (192 aa)) enclose the E2 domain. 2 heparin-binding regions span residues 314-346 (FLRAKMDLEERRMRQINEVMREWAMADSQSKNL) and 414-445 (LMALRRYLRAEQKEQRHTLRHYQHVAAVDPEK). Residues 446-463 (AQQMRFQVQTHLQVIEER) are collagen-binding. N465 is a glycosylation site (N-linked (GlcNAc...) asparagine). Positions 497-580 (SELDASVPGS…RDELAPSGTG (84 aa)) are disordered. The span at 508-523 (SEDKGSLQPPESKDDP) shows a compositional bias: basic and acidic residues. Over residues 529–539 (KGSTDQESSSS) the composition is skewed to polar residues. N555 carries an N-linked (GlcNAc...) asparagine glycan. H565 is a binding site for Cu(2+). H565 is a binding site for Zn(2+). Residues 585 to 607 (ALSGLLIMGAGGGSLIVLSLLLL) traverse the membrane as a helical segment. Positions 608–619 (RKKKPYGTISHG) match the Basolateral sorting signal motif. Topologically, residues 608–654 (RKKKPYGTISHGVVEVDPMLTLEEQQLRELQRHGYENPTYRFLEERP) are cytoplasmic. Residues 636–652 (ELQRHGYENPTYRFLEE) are interaction with DAB1. The tract at residues 640-654 (HGYENPTYRFLEERP) is interaction with DAB2. Residues 644 to 647 (NPTY) carry the NPXY motif; contains endocytosis signal motif.

The protein belongs to the APP family. Monomer and homodimer. Heparin binding promotes homodimerization. Binds, via its C-terminus, to the PID domain of several cytoplasmic proteins, including APBB and APBA family members, MAPK8IP1 and DAB1. Binding to Dab1 inhibits its serine phosphorylation. Interacts with CPEB1. Interacts (via NPXY motif) with DAB2 (via PID domain); the interaction is impaired by tyrosine phosphorylation of the NPXY motif. Interacts (via NPXY motif) with DAB1. Proteolytically cleaved by caspases during neuronal apoptosis. Cleaved, in vitro, at Asp-624 by caspase-3. In terms of processing, N- and O-glycosylated.

The protein localises to the cell membrane. It is found in the cytoplasm. In terms of biological role, may play a role in postsynaptic function. The C-terminal gamma-secretase processed fragment, ALID1, activates transcription activation through APBB1 (Fe65) binding. Couples to JIP signal transduction through C-terminal binding. May interact with cellular G-protein signaling pathways. Can regulate neurite outgrowth through binding to components of the extracellular matrix such as heparin and collagen I. Functionally, the gamma-CTF peptide, C30, is a potent enhancer of neuronal apoptosis. The chain is Amyloid beta precursor like protein 1 (Aplp1) from Mus musculus (Mouse).